Here is a 120-residue protein sequence, read N- to C-terminus: NAD(P)H-quinone oxidoreductase subunit 3, chloroplastic (120 aa).

The next 3 membrane-spanning stretches (helical) occupy residues 10–30 (FWAF…ISGV), 64–84 (MFAL…PWAM), and 88–108 (VLGV…IGGL).

Belongs to the complex I subunit 3 family. NDH is composed of at least 16 different subunits, 5 of which are encoded in the nucleus.

It is found in the plastid. The protein localises to the chloroplast thylakoid membrane. The enzyme catalyses a plastoquinone + NADH + (n+1) H(+)(in) = a plastoquinol + NAD(+) + n H(+)(out). It catalyses the reaction a plastoquinone + NADPH + (n+1) H(+)(in) = a plastoquinol + NADP(+) + n H(+)(out). In terms of biological role, NDH shuttles electrons from NAD(P)H:plastoquinone, via FMN and iron-sulfur (Fe-S) centers, to quinones in the photosynthetic chain and possibly in a chloroplast respiratory chain. The immediate electron acceptor for the enzyme in this species is believed to be plastoquinone. Couples the redox reaction to proton translocation, and thus conserves the redox energy in a proton gradient. The polypeptide is NAD(P)H-quinone oxidoreductase subunit 3, chloroplastic (Ipomoea purpurea (Common morning glory)).